Reading from the N-terminus, the 482-residue chain is Glutamyl-tRNA(Gln) amidotransferase subunit A (482 aa).

Active-site charge relay system residues include Lys-75 and Ser-150. The active-site Acyl-ester intermediate is Ser-174.

Belongs to the amidase family. GatA subfamily. As to quaternary structure, heterotrimer of A, B and C subunits.

The enzyme catalyses L-glutamyl-tRNA(Gln) + L-glutamine + ATP + H2O = L-glutaminyl-tRNA(Gln) + L-glutamate + ADP + phosphate + H(+). Allows the formation of correctly charged Gln-tRNA(Gln) through the transamidation of misacylated Glu-tRNA(Gln) in organisms which lack glutaminyl-tRNA synthetase. The reaction takes place in the presence of glutamine and ATP through an activated gamma-phospho-Glu-tRNA(Gln). This is Glutamyl-tRNA(Gln) amidotransferase subunit A from Thermosynechococcus vestitus (strain NIES-2133 / IAM M-273 / BP-1).